Consider the following 224-residue polypeptide: Deoxyribose-phosphate aldolase (224 aa).

Catalysis depends on Asp-98, which acts as the Proton donor/acceptor. Catalysis depends on Lys-159, which acts as the Schiff-base intermediate with acetaldehyde. Lys-189 functions as the Proton donor/acceptor in the catalytic mechanism.

This sequence belongs to the DeoC/FbaB aldolase family. DeoC type 1 subfamily.

The protein resides in the cytoplasm. The enzyme catalyses 2-deoxy-D-ribose 5-phosphate = D-glyceraldehyde 3-phosphate + acetaldehyde. The protein operates within carbohydrate degradation; 2-deoxy-D-ribose 1-phosphate degradation; D-glyceraldehyde 3-phosphate and acetaldehyde from 2-deoxy-alpha-D-ribose 1-phosphate: step 2/2. In terms of biological role, catalyzes a reversible aldol reaction between acetaldehyde and D-glyceraldehyde 3-phosphate to generate 2-deoxy-D-ribose 5-phosphate. The protein is Deoxyribose-phosphate aldolase of Methanothermobacter thermautotrophicus (strain ATCC 29096 / DSM 1053 / JCM 10044 / NBRC 100330 / Delta H) (Methanobacterium thermoautotrophicum).